Here is a 149-residue protein sequence, read N- to C-terminus: Snake venom vascular endothelial growth factor toxin 2 (149 aa).

The first 24 residues, 1–24 (MAAYLLAVAILFCIQGWPSGTVQG), serve as a signal peptide directing secretion. Gln25 bears the Pyrrolidone carboxylic acid mark. 3 disulfides stabilise this stretch: Cys38–Cys80, Cys69–Cys115, and Cys73–Cys117. The tract at residues 118–149 (RPRSGRVNSGKRKRNPEEGGAESQVPLGLTSF) is disordered.

Belongs to the PDGF/VEGF growth factor family. Snake venom VEGF subfamily. Homodimer; disulfide-linked. Interacts with VEGF receptor-1 (FLT1) with a high affinity, whereas it binds to VEGF receptor-2 (KDR) with a low affinity. Does not bind VEGF receptor-3 (FLT4). In terms of tissue distribution, expressed by the venom gland.

Its subcellular location is the secreted. Functionally, snake venom VEGFs that may contribute to venom dispersion and prey subjugation by inducing vascular permeability and hypotension. This protein induces an increase in capillary permeability after intradermal injection, as well as a drastic hypotensive effect after intravenous injection. The hypotension is mediated by nitric oxide (NO), which is produced by VEGF-activated endothelium NO synthase. Also induces angiogenesis in vitro. Like other crotalid VEGFs, this protein interacts with VEGF receptor-1 (FLT1) with a high affinity, whereas it binds to VEGF receptor-2 (KDR) with a low affinity. This Sistrurus catenatus edwardsii (Desert massasauga) protein is Snake venom vascular endothelial growth factor toxin 2.